The following is a 141-amino-acid chain: Nucleoside diphosphate kinase (141 aa).

ATP contacts are provided by lysine 11, phenylalanine 59, arginine 87, threonine 93, arginine 104, and asparagine 114. Residue histidine 117 is the Pros-phosphohistidine intermediate of the active site.

It belongs to the NDK family. In terms of assembly, homotetramer. Requires Mg(2+) as cofactor.

The protein localises to the cytoplasm. The catalysed reaction is a 2'-deoxyribonucleoside 5'-diphosphate + ATP = a 2'-deoxyribonucleoside 5'-triphosphate + ADP. The enzyme catalyses a ribonucleoside 5'-diphosphate + ATP = a ribonucleoside 5'-triphosphate + ADP. Its function is as follows. Major role in the synthesis of nucleoside triphosphates other than ATP. The ATP gamma phosphate is transferred to the NDP beta phosphate via a ping-pong mechanism, using a phosphorylated active-site intermediate. In Delftia acidovorans (strain DSM 14801 / SPH-1), this protein is Nucleoside diphosphate kinase.